The primary structure comprises 179 residues: NADH dehydrogenase [ubiquinone] 1 beta subcomplex subunit 9 (179 aa).

Ala2 carries the post-translational modification N-acetylalanine. Ser85 is subject to Phosphoserine. A disordered region spans residues 139–160 (QLQEETPVGGPRTEALPPARKQ).

The protein belongs to the complex I LYR family. Mammalian complex I is composed of 45 different subunits.

The protein resides in the mitochondrion inner membrane. Accessory subunit of the mitochondrial membrane respiratory chain NADH dehydrogenase (Complex I), that is believed to be not involved in catalysis. Complex I functions in the transfer of electrons from NADH to the respiratory chain. The immediate electron acceptor for the enzyme is believed to be ubiquinone. The chain is NADH dehydrogenase [ubiquinone] 1 beta subcomplex subunit 9 (NDUFB9) from Bos taurus (Bovine).